The following is a 278-amino-acid chain: Elongation factor Ts (278 aa).

The interval threonine 80–valine 83 is involved in Mg(2+) ion dislocation from EF-Tu.

It belongs to the EF-Ts family.

The protein localises to the cytoplasm. Its function is as follows. Associates with the EF-Tu.GDP complex and induces the exchange of GDP to GTP. It remains bound to the aminoacyl-tRNA.EF-Tu.GTP complex up to the GTP hydrolysis stage on the ribosome. The sequence is that of Elongation factor Ts from Arthrobacter sp. (strain FB24).